A 312-amino-acid chain; its full sequence is Aspartate carbamoyltransferase catalytic subunit (312 aa).

Residues Arg-58 and Thr-59 each contribute to the carbamoyl phosphate site. Residue Lys-86 coordinates L-aspartate. Arg-108, His-136, and Gln-139 together coordinate carbamoyl phosphate. L-aspartate contacts are provided by Arg-169 and Arg-223. Residues Gly-264 and Pro-265 each contribute to the carbamoyl phosphate site.

The protein belongs to the aspartate/ornithine carbamoyltransferase superfamily. ATCase family. In terms of assembly, heterododecamer (2C3:3R2) of six catalytic PyrB chains organized as two trimers (C3), and six regulatory PyrI chains organized as three dimers (R2).

The enzyme catalyses carbamoyl phosphate + L-aspartate = N-carbamoyl-L-aspartate + phosphate + H(+). It participates in pyrimidine metabolism; UMP biosynthesis via de novo pathway; (S)-dihydroorotate from bicarbonate: step 2/3. In terms of biological role, catalyzes the condensation of carbamoyl phosphate and aspartate to form carbamoyl aspartate and inorganic phosphate, the committed step in the de novo pyrimidine nucleotide biosynthesis pathway. The sequence is that of Aspartate carbamoyltransferase catalytic subunit from Desulfitobacterium hafniense (strain DSM 10664 / DCB-2).